We begin with the raw amino-acid sequence, 614 residues long: MKSIILSCFVISAAASQSYLPTEQIDVQSSLLSDPNHVAGKTVDYMIAGGGLTGLTIAAKLTENPNINVLVIENGFYESSEGEIIEDLNDYGDIFGTTVDHAYEIVSQAINNRTENIRSGNGLGGSTLTNGGSWTRPHKAQIDSWEKVFGNKDWNWDNLFPYMQKAEIARPPNDVEIAAGHFYNSSCHGTNGTVHAGPRNNGEPYSPIIETLMDSAKERGVPTQLDFHCGVPRGISMIPNALHEDQVRSDAAREWLLPNYKRPNLQVLTGQFVGKVLINQTATSGAIPGYKAVGVNFGTNKNVNSNVYAKHEVLLASGSAVSPRILEYSGIGLKSVLDAAGIQQIVDLPVGLNMQDQTTTTVGSRTKPSGNGQGQAIYFATFNETFGDYAPPAHELLNTKLHQWATETVARGGFHNVTALEIQYENYRDWLVNEEVAYTELFLDTSGKINFDLWDLIPFTRGSVHIQGNDPYLRRFSYDPKFFMNELDLLGQAAGSKLAREISNTGGMQTYFDGETTPGSNLAYNADLDQWVDYVKQNFRANWHAVGTCSMMAEELGGVVDSAARVYGVEGLRVVDGSIPPTQVSSHVMTVFYAMSLKISDAILADFHAKSSKH.

The first 15 residues, 1-15, serve as a signal peptide directing secretion; sequence MKSIILSCFVISAAA. L52, T53, and E73 together coordinate FAD. Residue N112 is glycosylated (N-linked (GlcNAc...) asparagine). The disordered stretch occupies residues 117–136; the sequence is IRSGNGLGGSTLTNGGSWTR. FAD is bound by residues S126, N130, G131, and S133. Residues N184 and N191 are each glycosylated (N-linked (GlcNAc...) asparagine). A disulfide bridge links C187 with C229. V273 provides a ligand contact to FAD. N-linked (GlcNAc...) asparagine glycans are attached at residues N279, N383, and N416. Catalysis depends on H544, which acts as the Proton acceptor. Residues R565 and V566 each contribute to the O2 site. The FAD site is built by G577 and M589.

This sequence belongs to the GMC oxidoreductase family. In terms of assembly, homodimer. FAD is required as a cofactor.

It is found in the secreted. The protein localises to the cell wall. Its subcellular location is the cytoplasm. It localises to the extracellular space. The protein resides in the extracellular matrix. It catalyses the reaction beta-D-glucose + O2 = D-glucono-1,5-lactone + H2O2. In terms of biological role, glucose oxidase catalyzes the oxidation of beta-D-glucose to D-glucono-delta-lactone and hydrogen peroxide in the presence of molecular oxygen. The chain is Glucose oxidase 1 from Penicillium expansum (Blue mold rot fungus).